Reading from the N-terminus, the 25-residue chain is Chaperone protein DnaK (25 aa).

Belongs to the heat shock protein 70 family.

Acts as a chaperone. The polypeptide is Chaperone protein DnaK (dnaK) (Acinetobacter calcoaceticus).